The primary structure comprises 291 residues: MTRSFPDRLPTNLAFPGISVINQSSFVDLLRRQAPELLPVSLGGGQSGGGQQLSHGTTIVVLKYPGGVVIAGDRRSTQGNMIAGRDVRKVYITDDYTATGIAGIAAVAVEFARLYAVELEHYEKLEGVPLTFAGKVNRLAIMVRSNLTAAMQGLLALPLLAGYDIHAPDPQSAGRIVSFDAAGGWNIEEEGYQSVGSGSIFAKSSIKKLYSQVSDADSALRVAIEALYDAADDDSATGGPDLVRGIYPTAVTIGAEGAAEVTESRIAELAREIIESRSRAYTLGSFGGSEK.

The propeptide at 1–56 (MTRSFPDRLPTNLAFPGISVINQSSFVDLLRRQAPELLPVSLGGGQSGGGQQLSHG) is removed in mature form; by autocatalysis. Threonine 57 serves as the catalytic Nucleophile.

The protein belongs to the peptidase T1B family. In terms of assembly, the 20S proteasome core is composed of 14 alpha and 14 beta subunits that assemble into four stacked heptameric rings, resulting in a barrel-shaped structure. The two inner rings, each composed of seven catalytic beta subunits, are sandwiched by two outer rings, each composed of seven alpha subunits. The catalytic chamber with the active sites is on the inside of the barrel. Has a gated structure, the ends of the cylinder being occluded by the N-termini of the alpha-subunits. Is capped by the proteasome-associated ATPase, ARC.

It is found in the cytoplasm. It catalyses the reaction Cleavage of peptide bonds with very broad specificity.. Its pathway is protein degradation; proteasomal Pup-dependent pathway. With respect to regulation, the formation of the proteasomal ATPase ARC-20S proteasome complex, likely via the docking of the C-termini of ARC into the intersubunit pockets in the alpha-rings, may trigger opening of the gate for substrate entry. Interconversion between the open-gate and close-gate conformations leads to a dynamic regulation of the 20S proteasome proteolysis activity. In terms of biological role, component of the proteasome core, a large protease complex with broad specificity involved in protein degradation. This is Proteasome subunit beta from Mycobacterium leprae (strain Br4923).